Reading from the N-terminus, the 249-residue chain is DNA repair protein RecO (249 aa).

The protein belongs to the RecO family.

In terms of biological role, involved in DNA repair and RecF pathway recombination. This is DNA repair protein RecO from Leptospira biflexa serovar Patoc (strain Patoc 1 / Ames).